The sequence spans 451 residues: Endosomal transmembrane epsin interactor 1 (451 aa).

Positions Met1 to Gly29 are cleaved as a signal peptide. The Lumenal portion of the chain corresponds to Ala30 to Lys85. A helical transmembrane segment spans residues Val86–Ala106. The Cytoplasmic segment spans residues Leu107 to Leu451. The mediates interaction with EPN1 stretch occupies residues Leu107–Leu451. 2 consecutive short sequence motifs (PPxY; mediates interaction with ITCH) follow at residues Pro148 to Tyr151 and Pro194 to Tyr197. Polar residues predominate over residues Thr204–Gln213. A disordered region spans residues Thr204 to Pro224. Lys274 participates in a covalent cross-link: Glycyl lysine isopeptide (Lys-Gly) (interchain with G-Cter in ubiquitin). At Ser275 the chain carries Phosphoserine. A Glycyl lysine isopeptide (Lys-Gly) (interchain with G-Cter in ubiquitin) cross-link involves residue Lys365.

Belongs to the ENTREP family. Interacts with ITCH; enhances the ubiquitination of CXCR4 by ITCH and the subsequent endocytosis and desensitization of the receptor. Interacts with EPN1.

The protein localises to the early endosome membrane. The protein resides in the late endosome membrane. Its subcellular location is the recycling endosome membrane. It is found in the cell membrane. Functionally, functions as an activator of the E3 ubiquitin protein ligase ITCH in the ubiquitination of the CXCL12-activated CXCR4 receptor. Thereby, triggers CXCR4 endocytosis and desensitization, negatively regulating the CXCL12/CXCR4 signaling pathway. This Mus musculus (Mouse) protein is Endosomal transmembrane epsin interactor 1.